The sequence spans 215 residues: Proapoptotic nucleolar protein 1 (215 aa).

A disordered region spans residues 35 to 215 (RKGTPTARCL…RLPAPRSAST (181 aa)). A compositionally biased stretch (pro residues) spans 169-180 (PRPPQHLSPPQP). Residues 185 to 215 (MGAAEGSRRADTHHARRRRRARLPAPRSAST) form a necessary for nucleolar localization region.

In terms of tissue distribution, widely expressed.

The protein localises to the nucleus. The protein resides in the nucleolus. Its function is as follows. Apoptosis-inducing protein that modulates the tumor suppressor function of CDKN2A/p14ARF. Enhances the stability of CDKN2A/p14ARF protein by protecting it from degradation. May act as a tumor suppressor. The sequence is that of Proapoptotic nucleolar protein 1 from Homo sapiens (Human).